The sequence spans 531 residues: Efflux pump terG (531 aa).

Residues 1-11 show a composition bias toward polar residues; sequence MSSSTLEGQET. The segment at 1-27 is disordered; that stretch reads MSSSTLEGQETASHHSKNSPSRHGDDG. The next 13 membrane-spanning stretches (helical) occupy residues 86-106, 117-137, 145-165, 179-199, 207-227, 249-269, 280-300, 319-339, 351-371, 380-400, 402-422, 447-467, and 488-508; these read GKLS…ILIG, AIFV…GVSV, ILAR…ALAI, FAWF…FGPL, WIYW…IVAI, IDLL…FAWN, YVYV…YVEL, FVFG…FYVI, IQMA…ALIV, ASSI…LMAL, PVHS…TFAM, SVIM…AGTI, and TLWF…IFLL.

This sequence belongs to the major facilitator superfamily.

It is found in the cell membrane. Its function is as follows. Efflux pump that might be required for efficient secretion of terrein or other secondary metabolies produced by the terrein genne cluster. This Aspergillus terreus (strain NIH 2624 / FGSC A1156) protein is Efflux pump terG.